A 325-amino-acid polypeptide reads, in one-letter code: Beta-ketoacyl-[acyl-carrier-protein] synthase III (325 aa).

Residues cysteine 116 and histidine 252 contribute to the active site. Residues 253–257 (QANLR) are ACP-binding. Asparagine 282 is an active-site residue.

Belongs to the thiolase-like superfamily. FabH family. Homodimer.

It localises to the cytoplasm. The catalysed reaction is malonyl-[ACP] + acetyl-CoA + H(+) = 3-oxobutanoyl-[ACP] + CO2 + CoA. The protein operates within lipid metabolism; fatty acid biosynthesis. Catalyzes the condensation reaction of fatty acid synthesis by the addition to an acyl acceptor of two carbons from malonyl-ACP. Catalyzes the first condensation reaction which initiates fatty acid synthesis and may therefore play a role in governing the total rate of fatty acid production. Possesses both acetoacetyl-ACP synthase and acetyl transacylase activities. Its substrate specificity determines the biosynthesis of branched-chain and/or straight-chain of fatty acids. This is Beta-ketoacyl-[acyl-carrier-protein] synthase III from Xanthomonas oryzae pv. oryzae (strain MAFF 311018).